A 434-amino-acid chain; its full sequence is Glutamyl-tRNA reductase 2 (434 aa).

Substrate contacts are provided by residues 57 to 60 (TCNR), serine 113, 118 to 120 (DFE), and glutamine 124. The active-site Nucleophile is the cysteine 58. An NADP(+)-binding site is contributed by 193–198 (GTGKIG).

This sequence belongs to the glutamyl-tRNA reductase family. In terms of assembly, homodimer.

The catalysed reaction is (S)-4-amino-5-oxopentanoate + tRNA(Glu) + NADP(+) = L-glutamyl-tRNA(Glu) + NADPH + H(+). It participates in porphyrin-containing compound metabolism; protoporphyrin-IX biosynthesis; 5-aminolevulinate from L-glutamyl-tRNA(Glu): step 1/2. Functionally, catalyzes the NADPH-dependent reduction of glutamyl-tRNA(Glu) to glutamate 1-semialdehyde (GSA). The protein is Glutamyl-tRNA reductase 2 of Flavobacterium johnsoniae (strain ATCC 17061 / DSM 2064 / JCM 8514 / BCRC 14874 / CCUG 350202 / NBRC 14942 / NCIMB 11054 / UW101) (Cytophaga johnsonae).